Reading from the N-terminus, the 140-residue chain is Chromatin accessibility complex 16kD protein (140 aa).

Positions 111-140 (LNRSAGSDDDDDDDDDDDEEESESESESDE) are disordered. The span at 117–140 (SDDDDDDDDDDDEEESESESESDE) shows a compositional bias: acidic residues.

As to quaternary structure, component of the chromatin accessibility complex (CHRAC), composed of Chrac-14, Chrac-16, Acf and Iswi. Forms a heterodimer with Chrac-14. The Chrac-14/Chrac-16 heterodimer interacts with Acf (via N-terminus). Stabilizes the interaction between Chrac-14 and Iswi.

The protein resides in the nucleus. Functionally, histone-like protein which promotes nucleosome sliding of ATP-dependent nucleosome remodeling complexes. Part of the chromatin-accessibility complex (CHRAC) which uses energy/ATP to increase the general accessibility of DNA in chromatin. As a heterodimer with Chrac-14, binds DNA and facilitates nucleosome sliding by Acf. As part of the CHRAC complex, required for oogenesis. This is Chromatin accessibility complex 16kD protein from Drosophila melanogaster (Fruit fly).